The sequence spans 360 residues: Phenylalanine--tRNA ligase alpha subunit (360 aa).

Glutamate 260 contributes to the Mg(2+) binding site.

This sequence belongs to the class-II aminoacyl-tRNA synthetase family. Phe-tRNA synthetase alpha subunit type 1 subfamily. In terms of assembly, tetramer of two alpha and two beta subunits. The cofactor is Mg(2+).

The protein localises to the cytoplasm. It catalyses the reaction tRNA(Phe) + L-phenylalanine + ATP = L-phenylalanyl-tRNA(Phe) + AMP + diphosphate + H(+). The protein is Phenylalanine--tRNA ligase alpha subunit of Rhizobium etli (strain CIAT 652).